A 310-amino-acid chain; its full sequence is MKPKIFIDGEHGTTGLQIRTRLAERDDLEVISIPEAERRNKDLRADYLRAADIAILCLPDDASKEAVSLLEGHNSTRIIDTSTTHRVHPDWAYGFAELAKGQRERIAEARLVANPGCYPTGAIALVRPLRDAGLLPADYPVSVNAVSGYTGGGKQLIAQMEDRNHPDYLAANNFLYGLPLKHKHVPELQLHGRLDRRPIFSPSVGRFPQGMIVQVPLFLSELEGSPSLAKVHAVLTEHYAGQDIVEVVPLEESAKLPRVDAEELAGKDGMKLFVFGTEDHGQVNLVALLDNLGKGASGAAVQNMNLMLGK.

Cys-117 is a catalytic residue.

Belongs to the NAGSA dehydrogenase family. Type 2 subfamily.

The protein resides in the cytoplasm. The catalysed reaction is N-acetyl-L-glutamate 5-semialdehyde + phosphate + NADP(+) = N-acetyl-L-glutamyl 5-phosphate + NADPH + H(+). It participates in amino-acid biosynthesis; L-arginine biosynthesis; N(2)-acetyl-L-ornithine from L-glutamate: step 3/4. Functionally, catalyzes the NADPH-dependent reduction of N-acetyl-5-glutamyl phosphate to yield N-acetyl-L-glutamate 5-semialdehyde. The sequence is that of N-acetyl-gamma-glutamyl-phosphate reductase from Brucella melitensis biotype 1 (strain ATCC 23456 / CCUG 17765 / NCTC 10094 / 16M).